The primary structure comprises 311 residues: 4-hydroxy-tetrahydrodipicolinate synthase (311 aa).

Residue T49 participates in pyruvate binding. The active-site Proton donor/acceptor is Y138. The active-site Schiff-base intermediate with substrate is the K166. V207 is a binding site for pyruvate.

The protein belongs to the DapA family. Homotetramer; dimer of dimers.

It is found in the cytoplasm. The catalysed reaction is L-aspartate 4-semialdehyde + pyruvate = (2S,4S)-4-hydroxy-2,3,4,5-tetrahydrodipicolinate + H2O + H(+). It participates in amino-acid biosynthesis; L-lysine biosynthesis via DAP pathway; (S)-tetrahydrodipicolinate from L-aspartate: step 3/4. In terms of biological role, catalyzes the condensation of (S)-aspartate-beta-semialdehyde [(S)-ASA] and pyruvate to 4-hydroxy-tetrahydrodipicolinate (HTPA). The chain is 4-hydroxy-tetrahydrodipicolinate synthase from Lactobacillus helveticus (strain DPC 4571).